Here is a 135-residue protein sequence, read N- to C-terminus: UPF0102 protein Mkms_2031 (135 aa).

It belongs to the UPF0102 family.

The chain is UPF0102 protein Mkms_2031 from Mycobacterium sp. (strain KMS).